Reading from the N-terminus, the 195-residue chain is Protein GrpE (195 aa).

The protein belongs to the GrpE family. As to quaternary structure, homodimer.

It localises to the cytoplasm. In terms of biological role, participates actively in the response to hyperosmotic and heat shock by preventing the aggregation of stress-denatured proteins, in association with DnaK and GrpE. It is the nucleotide exchange factor for DnaK and may function as a thermosensor. Unfolded proteins bind initially to DnaJ; upon interaction with the DnaJ-bound protein, DnaK hydrolyzes its bound ATP, resulting in the formation of a stable complex. GrpE releases ADP from DnaK; ATP binding to DnaK triggers the release of the substrate protein, thus completing the reaction cycle. Several rounds of ATP-dependent interactions between DnaJ, DnaK and GrpE are required for fully efficient folding. The protein is Protein GrpE of Francisella tularensis subsp. holarctica (strain FTNF002-00 / FTA).